Consider the following 299-residue polypeptide: Nucleotide-binding protein DIP1313 (299 aa).

Residue 22-29 participates in ATP binding; the sequence is GLSGAGLS. A GTP-binding site is contributed by 73 to 76; it reads DVRS.

Belongs to the RapZ-like family.

In terms of biological role, displays ATPase and GTPase activities. This chain is Nucleotide-binding protein DIP1313, found in Corynebacterium diphtheriae (strain ATCC 700971 / NCTC 13129 / Biotype gravis).